Reading from the N-terminus, the 520-residue chain is Protein U4 (520 aa).

Belongs to the herpesviridae U4 family.

The sequence is that of Protein U4 from Elephantid herpesvirus 1 (isolate Asian elephant/Berlin/Kiba/1998) (EIHV-1).